Consider the following 410-residue polypeptide: Chloroacetanilide N-alkylformylase, ferredoxin reductase component (410 aa).

FAD-binding residues include Gly14, Asp36, Lys49, Val82, Arg130, Asp279, and Val298.

Belongs to the FAD-dependent oxidoreductase family. In terms of assembly, the chloroacetanilide N-alkylformylase multicomponent enzyme system is composed of an oxygenase component (CndA) and an electron transfer component formed by a ferredoxin reductase (CndC1) and a ferredoxin (CndB1). In vitro, chloroacetanilide N-alkylformylase assays in which CndB1 is substituted for CndB2 demonstrate that the two enzymes possess nearly identical activities. It depends on FAD as a cofactor.

It carries out the reaction 2 reduced [2Fe-2S]-[ferredoxin] + NAD(+) + H(+) = 2 oxidized [2Fe-2S]-[ferredoxin] + NADH. Component of the chloroacetanilide N-alkylformylase multicomponent enzyme system involved in the degradation of chloroacetanilide herbicides (N-alkoxyalkyl-N-chloroacetyl-substituted aniline derivatives). In vitro, catalyzes the transfers of electrons from ferredoxin (CndB1) to NADH. N-dealkylase utilizes NADH, but not NADPH, as the electron donor. This chain is Chloroacetanilide N-alkylformylase, ferredoxin reductase component, found in Rhizorhabdus wittichii (strain DC-6 / KACC 16600) (Sphingomonas wittichii).